Here is a 546-residue protein sequence, read N- to C-terminus: Chaperonin GroEL (546 aa).

ATP is bound by residues 30–33 (TLGP), Lys51, 87–91 (DGTTT), Gly415, 479–481 (NAA), and Asp495.

Belongs to the chaperonin (HSP60) family. Forms a cylinder of 14 subunits composed of two heptameric rings stacked back-to-back. Interacts with the co-chaperonin GroES.

The protein resides in the cytoplasm. It catalyses the reaction ATP + H2O + a folded polypeptide = ADP + phosphate + an unfolded polypeptide.. Functionally, together with its co-chaperonin GroES, plays an essential role in assisting protein folding. The GroEL-GroES system forms a nano-cage that allows encapsulation of the non-native substrate proteins and provides a physical environment optimized to promote and accelerate protein folding. This is Chaperonin GroEL from Azotobacter vinelandii.